A 531-amino-acid chain; its full sequence is MAGISIFGLLPFTSPDIVAVNVSHIFLQMALWRSSDNLVYLPPTPVSKVLSTDDYVTRTNIYYYAGTSRLLTVGHPYFPIPKSSNNKVDVPKVSAFQYRVFRVRLPDPNKFGLPDARIYNPDAERLVWACTGVEVGRGQPLGVGLSGHPLYNKLEDTENSNIAHGPIGQDSRDNISVDNKQTQLCIIGCTPPMGEHWGKGTPCRNPPAQGDCPPLELITSPIQDGDMVDTGYGAMDFTALQLNKSDVPIDICQSTCKYPDYLGMAAEPYGDSMFFYLRREQLFARHFFNRASAVGDAIPDTFILKSNGGGRDVGSAVYSPTPSGSMVTSEAQLFNKPYWLRRAQGHNNGICWANQLFVTVVDTTRSTNMCLCVPSEASPATTYDATKFKEYLRHGEEYDLQFIFQLCKVTLTPDIMAYLHTMNSSLLEDWNFGLTLPPSTSLEDTYRFLSSSAITCQKDTPPTEKQDPYAKLNFWDVDLKDRFSLDLSQFPLGRKFLLQLGVRSRSAVSVRKRPATSATGSTAAKRKRTKK.

The interval 511-531 (RKRPATSATGSTAAKRKRTKK) is disordered.

The protein belongs to the papillomaviridae L1 protein family. Self-assembles into homopentamers. The capsid has an icosahedral symmetry and consists of 72 capsomers, with each capsomer being a pentamer of L1. Interacts with the minor capsid protein L2; this interaction is necessary for viral genome encapsidation. Interacts with protein E2; this interaction enhances E2-dependent replication and transcription activation.

It localises to the virion. Its subcellular location is the host nucleus. Forms an icosahedral capsid with a T=7 symmetry and a 50 nm diameter. The capsid is composed of 72 pentamers linked to each other by disulfide bonds and associated with L2 proteins. Binds to heparan sulfate proteoglycans on cell surface of basal layer keratinocytes to provide initial virion attachment. This binding mediates a conformational change in the virus capsid that facilitates efficient infection. The virion enters the host cell via endocytosis. During virus trafficking, L1 protein dissociates from the viral DNA and the genomic DNA is released to the host nucleus. The virion assembly takes place within the cell nucleus. Encapsulates the genomic DNA together with protein L2. This chain is Major capsid protein L1, found in Homo sapiens (Human).